We begin with the raw amino-acid sequence, 119 residues long: Nucleoid-associated protein Cphy_0047 (119 aa).

The interval 23–45 (AQRMQKQMEDKTKEMEEKQWEAT) is disordered. Positions 28-42 (KQMEDKTKEMEEKQW) are enriched in basic and acidic residues.

This sequence belongs to the YbaB/EbfC family. As to quaternary structure, homodimer.

It localises to the cytoplasm. Its subcellular location is the nucleoid. In terms of biological role, binds to DNA and alters its conformation. May be involved in regulation of gene expression, nucleoid organization and DNA protection. In Lachnoclostridium phytofermentans (strain ATCC 700394 / DSM 18823 / ISDg) (Clostridium phytofermentans), this protein is Nucleoid-associated protein Cphy_0047.